Reading from the N-terminus, the 127-residue chain is Small ribosomal subunit protein uS11 (127 aa).

The protein belongs to the universal ribosomal protein uS11 family. Part of the 30S ribosomal subunit. Interacts with proteins S7 and S18. Binds to IF-3.

Located on the platform of the 30S subunit, it bridges several disparate RNA helices of the 16S rRNA. Forms part of the Shine-Dalgarno cleft in the 70S ribosome. The sequence is that of Small ribosomal subunit protein uS11 from Streptococcus pyogenes serotype M1.